The sequence spans 123 residues: Fluoride-specific ion channel FluC (123 aa).

The next 4 membrane-spanning stretches (helical) occupy residues 7-27 (LAVAAGGALGALFRFYLSGLL), 39-59 (MVNGLASFILGYLYGLLFWGF), 68-88 (FLGTGFCGGLSTFSTFSYETF), and 101-121 (LNVAANVFVTISLVFIGFLLA). Na(+)-binding residues include Gly-75 and Ser-78.

It belongs to the fluoride channel Fluc/FEX (TC 1.A.43) family.

The protein resides in the cell membrane. It carries out the reaction fluoride(in) = fluoride(out). With respect to regulation, na(+) is not transported, but it plays an essential structural role and its presence is essential for fluoride channel function. Fluoride-specific ion channel. Important for reducing fluoride concentration in the cell, thus reducing its toxicity. This Thermococcus gammatolerans (strain DSM 15229 / JCM 11827 / EJ3) protein is Fluoride-specific ion channel FluC.